Here is a 224-residue protein sequence, read N- to C-terminus: 4'-phosphopantetheinyl transferase ffp (224 aa).

Asp107, Glu109, and Glu151 together coordinate Mg(2+). The interval 158 to 189 (GKGLSLPLDSFSVRLHEDGRVSVELPEHHTPC) is peptidyl carrier protein binding.

This sequence belongs to the P-Pant transferase superfamily. Gsp/Sfp/HetI/AcpT family. Mg(2+) serves as cofactor.

The catalysed reaction is apo-[peptidyl-carrier protein] + CoA = holo-[peptidyl-carrier protein] + adenosine 3',5'-bisphosphate + H(+). May activate the peptidyl carrier protein (PCP) domains of fengycin synthase by transferring the 4'-phosphopantetheinyl moiety of coenzyme A (CoA) to a serine residue. This Bacillus subtilis protein is 4'-phosphopantetheinyl transferase ffp (ffp).